Consider the following 1000-residue polypeptide: MEELIKAPNSNFIIMSNQPYQTTSPEIVEDYIIKRGQPFVLTGTTQGWSRSNMFTLDFLSERYSEMELINSPRNNETHTDLQGWRMKDFISYLQVSPEERNPKHLYGKDIACPREWQEYLSHKLQPQYSYKSRFDLVSHLPDYLQPETLLVYIGSNGTYTPGHIDMCGSLSQNLMVSSDQDAFAWWFIVPTEYKDEALKFWGDKGGDVYNESRFIRPIDLLGAPFPIYVFKQRPGDFIFVPPDSVHQVVNCGPGISTKVAWNSISLKSLPISYFSSLPHTRRMAKPELFRIKAIAYYTLRKIMGDVENTNFNTIDVNDVIDIIAPLLEIFHNILQTESILIPKPNYPYCNGETIPFLQPFKYFNGDRIQDRRCDHCNSDIFNRCYHCETCKTDDGQGKDFCFDCVSSGIGCEFHFKVMVLKEFISHSKLKKELSSFYEIYKNLLAHSGRRPKEVDDIITKSTDRVSDECGFLTTATVAYHVVFYSSQKKIKCHRCEKRFKKFSIIFCTNCNARFCEQCVVNTFGQNFQVLMKRNEWECFCCKGLCDCSNCTSNSNSSNHPRILNNNQQLGLPYNNNNNSNNNNNNNINNNNNNNNNNINNNNNNMNNNNSINNNNNNNNNNNINNNNINNNNHHNNNGNNNLNSSYSSLNALSSLSQQQSYGSYDNYNNNNNNNNYNNNNNNNGHIQILKSGRQYDDEQSSSSGSGSSNSTPTKPRPRNGGDDGLMSHFSGNNNNNNNHHNNNNNNNNNHHMMSHHHHNNNNNNNNNNNPTTSSLSSLSTSLSSSSTSTQKPMDVHSKKRPIVLDNDKPKGRPPKNLKEWTSTHKFIISLIELFRSSNNAILGKPNPHYKPIENLPPLVQLYLSQRKAFGGVLWAKTNSCPLLPCIWVKDLSVIPPNTKLLPSLIQGKKIVVLFFGDQDQEEYVGIVGKKSIFSFDEVNQTLLLKCGEVPLAQLEDLFNTTEPEIAMKKDIAAFNYKNQIEEKEEGLYVKQELYNNKKII.

The JmjC domain maps to 113–280; sequence PREWQEYLSH…ISYFSSLPHT (168 aa). Residues 489–544 form a PHD-type; atypical zinc finger; the sequence is KIKCHRCEKRFKKFSIIFCTNCNARFCEQCVVNTFGQNFQVLMKRNEWECFCCKGL. The RING-type; degenerate zinc finger occupies 492–542; sequence CHRCEKRFKKFSIIFCTNCNARFCEQCVVNTFGQNFQVLMKRNEWECFCCK. Disordered regions lie at residues 561-647 and 660-818; these read RILN…SSYS and SYGS…KNLK. 5 stretches are compositionally biased toward low complexity: residues 574–647, 660–683, 700–710, 732–751, and 760–789; these read NNNN…SSYS, SYGS…NNNN, SSSSGSGSSNS, NNNN…NNHH, and NNNN…STST. The segment covering 805-818 has biased composition (basic and acidic residues); it reads DNDKPKGRPPKNLK. The segment at residues 810–818 is a DNA-binding region (a.T hook); that stretch reads KGRPPKNLK.

As to quaternary structure, monomer.

The protein localises to the nucleus. In terms of biological role, transcriptional regulator involved in phagocytosis and pinocytosis. Both activates and represses transcription. Regulates expression of acaA, carA, pkaC, csaA, cotB and lagC. Promotes amplification of the tRNA gene-associated retrotransposon TRE5-A, a mobile genetic element formerly called as Dictyostelium repetitive element (DRE). Suppresses agnC and agnE encoding argonaute proteins which are part of a RNA interference pathway controlling TRE5-A amplification. Required for amplification of both sense and antisense RNA transcripts, but does not activate their promoters found in A-module and C-module of the TRE5-A, respectively. Nevertheless, binds to distinct DNA sequences containing A and T stretches within the C-module in vitro. The sequence is that of C-module-binding factor A from Dictyostelium discoideum (Social amoeba).